Here is a 74-residue protein sequence, read N- to C-terminus: ATP synthase subunit c (74 aa).

Helical transmembrane passes span 8 to 28 and 52 to 72; these read FIGIGFMAIGMYGAALGVSNI and IGAGLAEAMGLFSFVIAMLLI.

Belongs to the ATPase C chain family. As to quaternary structure, F-type ATPases have 2 components, F(1) - the catalytic core - and F(0) - the membrane proton channel. F(1) has five subunits: alpha(3), beta(3), gamma(1), delta(1), epsilon(1). F(0) has three main subunits: a(1), b(2) and c(10-14). The alpha and beta chains form an alternating ring which encloses part of the gamma chain. F(1) is attached to F(0) by a central stalk formed by the gamma and epsilon chains, while a peripheral stalk is formed by the delta and b chains.

The protein localises to the cell inner membrane. In terms of biological role, f(1)F(0) ATP synthase produces ATP from ADP in the presence of a proton or sodium gradient. F-type ATPases consist of two structural domains, F(1) containing the extramembraneous catalytic core and F(0) containing the membrane proton channel, linked together by a central stalk and a peripheral stalk. During catalysis, ATP synthesis in the catalytic domain of F(1) is coupled via a rotary mechanism of the central stalk subunits to proton translocation. Its function is as follows. Key component of the F(0) channel; it plays a direct role in translocation across the membrane. A homomeric c-ring of between 10-14 subunits forms the central stalk rotor element with the F(1) delta and epsilon subunits. The chain is ATP synthase subunit c from Rickettsia prowazekii (strain Madrid E).